A 525-amino-acid polypeptide reads, in one-letter code: Arylsulfatase G (525 aa).

The first 16 residues, 1–16, serve as a signal peptide directing secretion; sequence MGWLFLKVLLVGMAFS. Residues D44, D45, and C84 each coordinate Ca(2+). Residue C84 is the Nucleophile of the active site. C84 bears the 3-oxoalanine (Cys) mark. N117 is a glycosylation site (N-linked (GlcNAc...) asparagine). A substrate-binding site is contributed by K137. Residue H139 is part of the active site. S162 serves as a coordination point for substrate. N215 carries N-linked (GlcNAc...) asparagine glycosylation. H251 contacts substrate. Ca(2+)-binding residues include D302 and N303. N356 and N497 each carry an N-linked (GlcNAc...) asparagine glycan.

The protein belongs to the sulfatase family. It depends on Ca(2+) as a cofactor. Post-translationally, N-glycosylated with both high mannose and complex type sugars. In terms of processing, the conversion to 3-oxoalanine (also known as C-formylglycine, FGly), of a serine or cysteine residue in prokaryotes and of a cysteine residue in eukaryotes, is critical for catalytic activity. The 63-kDa precursor undergoes proteolytic processing in two steps, yielding two fragments in the first step (apparent molecular masses of 44 and 18 kDa). In the second step, the 44-kDa fragment is processed further to the 34- and 10-kDa chains. The 10-kDa chain is a cleavage product of the 44-kDa fragment but linked to the 18-kDa chain through a disulfide bridge. In terms of tissue distribution, highly expressed in the spleen, kidney, liver, brain, and testis (at protein level).

The protein resides in the lysosome. It catalyses the reaction an aryl sulfate + H2O = a phenol + sulfate + H(+). It carries out the reaction Hydrolysis of the 3-sulfate groups of the N-sulfo-D-glucosamine 3-O-sulfate units of heparin.. Functionally, displays arylsulfatase activity at acidic pH towards the artificial substrate p-nitrocatechol sulfate. Catalyzes the hydrolysis of the 3-sulfate groups of the N-sulfo-D-glucosamine 3-O-sulfate units of heparin. The chain is Arylsulfatase G (Arsg) from Mus musculus (Mouse).